Reading from the N-terminus, the 227-residue chain is Urease accessory protein UreF (227 aa).

It belongs to the UreF family. As to quaternary structure, ureD, UreF and UreG form a complex that acts as a GTP-hydrolysis-dependent molecular chaperone, activating the urease apoprotein by helping to assemble the nickel containing metallocenter of UreC. The UreE protein probably delivers the nickel.

It is found in the cytoplasm. Its function is as follows. Required for maturation of urease via the functional incorporation of the urease nickel metallocenter. The sequence is that of Urease accessory protein UreF from Bacillus sp. (strain TB-90).